The primary structure comprises 160 residues: Large ribosomal subunit protein uL10 (160 aa).

Belongs to the universal ribosomal protein uL10 family. In terms of assembly, part of the ribosomal stalk of the 50S ribosomal subunit. The N-terminus interacts with L11 and the large rRNA to form the base of the stalk. The C-terminus forms an elongated spine to which L12 dimers bind in a sequential fashion forming a multimeric L10(L12)X complex.

In terms of biological role, forms part of the ribosomal stalk, playing a central role in the interaction of the ribosome with GTP-bound translation factors. This chain is Large ribosomal subunit protein uL10, found in Wolinella succinogenes (strain ATCC 29543 / DSM 1740 / CCUG 13145 / JCM 31913 / LMG 7466 / NCTC 11488 / FDC 602W) (Vibrio succinogenes).